A 526-amino-acid chain; its full sequence is Bifunctional purine biosynthesis protein PurH (526 aa).

An MGS-like domain is found at 1–148 (MSLNNIIKNA…KNYKDVIVIV (148 aa)).

This sequence belongs to the PurH family.

It carries out the reaction (6R)-10-formyltetrahydrofolate + 5-amino-1-(5-phospho-beta-D-ribosyl)imidazole-4-carboxamide = 5-formamido-1-(5-phospho-D-ribosyl)imidazole-4-carboxamide + (6S)-5,6,7,8-tetrahydrofolate. It catalyses the reaction IMP + H2O = 5-formamido-1-(5-phospho-D-ribosyl)imidazole-4-carboxamide. It functions in the pathway purine metabolism; IMP biosynthesis via de novo pathway; 5-formamido-1-(5-phospho-D-ribosyl)imidazole-4-carboxamide from 5-amino-1-(5-phospho-D-ribosyl)imidazole-4-carboxamide (10-formyl THF route): step 1/1. Its pathway is purine metabolism; IMP biosynthesis via de novo pathway; IMP from 5-formamido-1-(5-phospho-D-ribosyl)imidazole-4-carboxamide: step 1/1. The sequence is that of Bifunctional purine biosynthesis protein PurH from Buchnera aphidicola subsp. Schizaphis graminum (strain Sg).